The following is a 359-amino-acid chain: MTSASKGILRPFLIVCIILGCFMACLLIYIKPTNSWIFSPMESASSVLKMKNFFSTKTDYFNETTILIWVWPFGQTFDLTSCQAMFNIQGCHLTTDRSLYNKSHAVLIHHRDISWDLTNLPQQARPPFQKWIWMNLESPTHTPQKSGIEHLFNLTLTYRRDSDIQVPYGFLTVSTNPFVFEVPSKEKLVCWVVSNWNPEHARVKYYNELSKSIEIHTYGQAFGEYVNDKNLIPTISTCKFYLSFENSIHKDYITEKLYNAFLAGSVPVVLGPSRENYENYIPADSFIHVEDYNSPSELAKYLKEVDKNNKLYLSYFNWRKDFTVNLPRFWESHACLACDHVKRHQEYKSVGNLEKWFWN.

Residues 1–11 (MTSASKGILRP) are Cytoplasmic-facing. Residues 12–32 (FLIVCIILGCFMACLLIYIKP) traverse the membrane as a helical; Signal-anchor for type II membrane protein segment. The Lumenal segment spans residues 33-359 (TNSWIFSPME…VGNLEKWFWN (327 aa)). The N-linked (GlcNAc...) asparagine glycan is linked to asparagine 62. Positions 63-168 (ETTILIWVWP…RRDSDIQVPY (106 aa)) are acceptor-binding. Glutamine 75 is an a beta-D-galactosyl-(1-&gt;4)-N-acetyl-beta-D-glucosaminyl derivative binding site. 3 disulfide bridges follow: cysteine 82-cysteine 335, cysteine 91-cysteine 338, and cysteine 190-cysteine 238. A glycan (N-linked (GlcNAc...) asparagine) is linked at asparagine 101. Glutamate 137 serves as a coordination point for a beta-D-galactosyl-(1-&gt;4)-N-acetyl-beta-D-glucosaminyl derivative. Catalysis depends on glutamate 137, which acts as the Nucleophile. Position 137 (glutamate 137) interacts with GDP-beta-L-fucose. Asparagine 153 is a glycosylation site (N-linked (GlcNAc...) asparagine). GDP-beta-L-fucose-binding residues include tyrosine 168, valine 192, serine 194, asparagine 195, arginine 202, valine 226, tyrosine 241, asparagine 246, tyrosine 252, glutamate 255, and lysine 256. The tract at residues 169–326 (GFLTVSTNPF…NWRKDFTVNL (158 aa)) is donor-binding. The interval 327–359 (PRFWESHACLACDHVKRHQEYKSVGNLEKWFWN) is acceptor-binding.

Belongs to the glycosyltransferase 10 family. Homodimer. Post-translationally, N-glycosylated with complex-type N-glycans.

It localises to the golgi apparatus. The protein resides in the trans-Golgi network membrane. Its subcellular location is the golgi apparatus membrane. The catalysed reaction is a beta-D-galactosyl-(1-&gt;4)-N-acetyl-beta-D-glucosaminyl derivative + GDP-beta-L-fucose = a beta-D-galactosyl-(1-&gt;4)-[alpha-L-fucosyl-(1-&gt;3)]-N-acetyl-beta-D-glucosaminyl derivative + GDP + H(+). It carries out the reaction an alpha-Neu5Ac-(2-&gt;3)-beta-D-Gal-(1-&gt;4)-beta-D-GlcNAc-(1-&gt;3)-beta-D-Gal-(1-&gt;4)-beta-D-GlcNAc derivative + GDP-beta-L-fucose = an alpha-Neu5Ac-(2-&gt;3)-beta-D-Gal-(1-&gt;4)-beta-D-GlcNAc-(1-&gt;3)-beta-D-Gal-(1-&gt;4)-[alpha-L-Fuc-(1-&gt;3)]-beta-D-GlcNAc derivative + GDP + H(+). It catalyses the reaction alpha-N-glycoloylneuraminosyl-(2-&gt;3)-beta-D-galactosyl-(1-&gt;4)-N-acetyl-beta-D-glucosaminyl-(1-&gt;3)-beta-D-galactosyl-(1-&gt;4)-N-acetyl-beta-D-glucosaminyl-(1-&gt;3)-beta-D-galactosyl-(1-&gt;4)-beta-D-glucosyl-(1&lt;-&gt;1')-ceramide + GDP-beta-L-fucose = alpha-N-glycoloylneuraminosyl-(2-&gt;3)-beta-D-galactosyl-(1-&gt;4)-N-acetyl-beta-D-glucosaminyl-(1-&gt;3)-beta-D-galactosyl-(1-&gt;4)-[alpha-L-fucosyl-(1-&gt;3)]-N-acetyl-beta-D-glucosaminyl-(1-&gt;3)-beta-D-galactosyl-(1-&gt;4)-beta-D-glucosyl-(1&lt;-&gt;1')-ceramide + GDP + H(+). The enzyme catalyses alpha-D-galactosyl-(1-&gt;3)-beta-D-galactosyl-(1-&gt;4)-N-acetyl-beta-D-glucosaminyl-(1-&gt;3)-beta-D-galactosyl-(1-&gt;4)-beta-D-glucosyl-(1&lt;-&gt;1')-ceramide + GDP-beta-L-fucose = a neolactoside IV(3)-alpha-Gal,III(3)-alpha-Fuc-nLc4Cer + GDP + H(+). The catalysed reaction is a neolactoside nLc4Cer + GDP-beta-L-fucose = a neolactoside III(3)-alpha-Fuc-nLc4Cer + GDP + H(+). It carries out the reaction an N-acetyl-alpha-neuraminyl-(2-&gt;3)-beta-D-galactosyl-(1-&gt;4)-N-acetyl-beta-D-glucosaminyl derivative + GDP-beta-L-fucose = an alpha-Neu5Ac-(2-&gt;3)-beta-D-Gal-(1-&gt;4)-[alpha-L-Fuc-(1-&gt;3)]-beta-D-GlcNAc derivative + GDP + H(+). It catalyses the reaction beta-D-Gal-(1-&gt;4)-beta-D-GlcNAc-(1-&gt;3)-beta-D-Gal-(1-&gt;4)-D-Glc + GDP-beta-L-fucose = beta-D-Gal-(1-&gt;4)-[alpha-L-Fuc-(1-&gt;3)]-beta-D-GlcNAc-(1-&gt;3)-beta-D-Gal-(1-&gt;4)-D-Glc + GDP + H(+). The enzyme catalyses an alpha-L-Fuc-(1-&gt;2)-beta-D-Gal-(1-&gt;4)-beta-D-GlcNAc derivative + GDP-beta-L-fucose = an alpha-L-Fuc-(1-&gt;2)-beta-D-Gal-(1-&gt;4)-[alpha-L-Fuc-(1-&gt;3)]-beta-D-GlcNAc derivative + GDP + H(+). It participates in protein modification; protein glycosylation. It functions in the pathway glycolipid biosynthesis. Activated by Mn2+. In terms of biological role, catalyzes alpha(1-&gt;3) linkage of fucosyl moiety transferred from GDP-beta-L-fucose to N-acetyl glucosamine (GlcNAc) within type 2 lactosamine (LacNAc, beta-D-Gal-(1-&gt;4)-beta-D-GlcNAc-) glycan attached to glycolipids and N- or O-linked glycoproteins. Fucosylates distal type 2 LacNAc and its fucosylated (H-type 2 LacNAc) and sialylated (sialyl-type 2 LacNAc) derivatives to form Lewis x (Lex) (CD15) and Lewis y (Ley) antigenic epitopes involved in cell adhesion and differentiation. Generates Lex epitopes in the brain, presumably playing a role in the maintenance of neuronal stemness and neurite outgrowth in progenitor neural cells. Fucosylates the internal type 2 LacNAc unit of the polylactosamine chain to form VIM-2 antigen that serves as recognition epitope for SELE. Can also modify milk oligosaccharides in particular type 2 tetrasaccharide LNnT. The sequence is that of 4-galactosyl-N-acetylglucosaminide 3-alpha-L-fucosyltransferase 9 from Canis lupus familiaris (Dog).